Consider the following 158-residue polypeptide: NAD(P)H-quinone oxidoreductase subunit J, chloroplastic (158 aa).

It belongs to the complex I 30 kDa subunit family. As to quaternary structure, NDH is composed of at least 16 different subunits, 5 of which are encoded in the nucleus.

It localises to the plastid. The protein resides in the chloroplast thylakoid membrane. The catalysed reaction is a plastoquinone + NADH + (n+1) H(+)(in) = a plastoquinol + NAD(+) + n H(+)(out). It catalyses the reaction a plastoquinone + NADPH + (n+1) H(+)(in) = a plastoquinol + NADP(+) + n H(+)(out). Functionally, NDH shuttles electrons from NAD(P)H:plastoquinone, via FMN and iron-sulfur (Fe-S) centers, to quinones in the photosynthetic chain and possibly in a chloroplast respiratory chain. The immediate electron acceptor for the enzyme in this species is believed to be plastoquinone. Couples the redox reaction to proton translocation, and thus conserves the redox energy in a proton gradient. The polypeptide is NAD(P)H-quinone oxidoreductase subunit J, chloroplastic (Nasturtium officinale (Watercress)).